Here is a 323-residue protein sequence, read N- to C-terminus: tRNA dimethylallyltransferase (323 aa).

18 to 25 (GPTASGKS) serves as a coordination point for ATP. 20 to 25 (TASGKS) is a binding site for substrate. 3 interaction with substrate tRNA regions span residues 43 to 46 (DSAQ), 167 to 171 (QRIQR), and 249 to 254 (RCVGYR).

This sequence belongs to the IPP transferase family. Monomer. Mg(2+) is required as a cofactor.

The enzyme catalyses adenosine(37) in tRNA + dimethylallyl diphosphate = N(6)-dimethylallyladenosine(37) in tRNA + diphosphate. Its function is as follows. Catalyzes the transfer of a dimethylallyl group onto the adenine at position 37 in tRNAs that read codons beginning with uridine, leading to the formation of N6-(dimethylallyl)adenosine (i(6)A). The sequence is that of tRNA dimethylallyltransferase from Nitrosospira multiformis (strain ATCC 25196 / NCIMB 11849 / C 71).